Reading from the N-terminus, the 131-residue chain is Small ribosomal subunit protein bS6 (131 aa).

Positions 92 to 131 (RVDEHKDGPSVQMQKRDERERGDRGDRGERRERRDRDDRN) are disordered.

The protein belongs to the bacterial ribosomal protein bS6 family.

Binds together with bS18 to 16S ribosomal RNA. The polypeptide is Small ribosomal subunit protein bS6 (Paracoccus denitrificans (strain Pd 1222)).